The chain runs to 513 residues: Bifunctional pantoate ligase/cytidylate kinase (513 aa).

The interval 1-283 (MVQVFRTIAG…VGSTRLIDNL (283 aa)) is pantoate--beta-alanine ligase. 30–37 (MGSLHAGH) is an ATP binding site. Residue His37 is the Proton donor of the active site. Gln61 is a binding site for (R)-pantoate. Gln61 is a beta-alanine binding site. Residue 150–153 (GAKD) coordinates ATP. A (R)-pantoate-binding site is contributed by Gln156. ATP contacts are provided by residues Val179 and 187-190 (MSSR). Positions 284-513 (VLNHRLPIIA…IELYKKYNKG (230 aa)) are cytidylate kinase.

In the N-terminal section; belongs to the pantothenate synthetase family. This sequence in the C-terminal section; belongs to the cytidylate kinase family. Type 1 subfamily.

Its subcellular location is the cytoplasm. It carries out the reaction (R)-pantoate + beta-alanine + ATP = (R)-pantothenate + AMP + diphosphate + H(+). The enzyme catalyses CMP + ATP = CDP + ADP. It catalyses the reaction dCMP + ATP = dCDP + ADP. It participates in cofactor biosynthesis; (R)-pantothenate biosynthesis; (R)-pantothenate from (R)-pantoate and beta-alanine: step 1/1. Its function is as follows. Catalyzes the condensation of pantoate with beta-alanine in an ATP-dependent reaction via a pantoyl-adenylate intermediate. Functionally, catalyzes the transfer of a phosphate group from ATP to either CMP or dCMP to form CDP or dCDP and ADP, respectively. The chain is Bifunctional pantoate ligase/cytidylate kinase from Synechocystis sp. (strain ATCC 27184 / PCC 6803 / Kazusa).